The primary structure comprises 209 residues: Uracil phosphoribosyltransferase (209 aa).

Residues arginine 79, arginine 104, and 131–139 (DPMLATGGS) contribute to the 5-phospho-alpha-D-ribose 1-diphosphate site. Uracil contacts are provided by residues isoleucine 194 and 199–201 (GDA). Position 200 (aspartate 200) interacts with 5-phospho-alpha-D-ribose 1-diphosphate.

Belongs to the UPRTase family. It depends on Mg(2+) as a cofactor.

The enzyme catalyses UMP + diphosphate = 5-phospho-alpha-D-ribose 1-diphosphate + uracil. Its pathway is pyrimidine metabolism; UMP biosynthesis via salvage pathway; UMP from uracil: step 1/1. With respect to regulation, allosterically activated by GTP. Its function is as follows. Catalyzes the conversion of uracil and 5-phospho-alpha-D-ribose 1-diphosphate (PRPP) to UMP and diphosphate. In Exiguobacterium sp. (strain ATCC BAA-1283 / AT1b), this protein is Uracil phosphoribosyltransferase.